Consider the following 553-residue polypeptide: Peroxiredoxin-2A (553 aa).

The region spanning 4–160 (IDVGDFVPDG…LMKMTTTTMS (157 aa)) is the Thioredoxin domain. C51 (cysteine sulfenic acid (-SOH) intermediate) is an active-site residue. Residues 156 to 201 (TTTMSNLPTDLLEEIISRVPRKYMRAVRLTCKRWNGMFKSQSFTKM) enclose the F-box domain.

Belongs to the peroxiredoxin family. Prx5 subfamily. As to quaternary structure, monomer.

The catalysed reaction is [glutaredoxin]-dithiol + a hydroperoxide = [glutaredoxin]-disulfide + an alcohol + H2O. Its function is as follows. Thiol-specific peroxidase that catalyzes the reduction of hydrogen peroxide and organic hydroperoxides to water and alcohols, respectively. Plays a role in cell protection against oxidative stress by detoxifying peroxides. May be involved in intracellular redox signaling. This is Peroxiredoxin-2A (PRXIIA) from Arabidopsis thaliana (Mouse-ear cress).